Reading from the N-terminus, the 213-residue chain is 3,4-dihydroxy-2-butanone 4-phosphate synthase (213 aa).

D-ribulose 5-phosphate-binding positions include 37-38, D42, 150-154, and E174; these read RE and RPGHT. A Mg(2+)-binding site is contributed by E38. H153 serves as a coordination point for Mg(2+).

It belongs to the DHBP synthase family. In terms of assembly, homodimer. Mg(2+) is required as a cofactor. Mn(2+) serves as cofactor.

It carries out the reaction D-ribulose 5-phosphate = (2S)-2-hydroxy-3-oxobutyl phosphate + formate + H(+). Its pathway is cofactor biosynthesis; riboflavin biosynthesis; 2-hydroxy-3-oxobutyl phosphate from D-ribulose 5-phosphate: step 1/1. Functionally, catalyzes the conversion of D-ribulose 5-phosphate to formate and 3,4-dihydroxy-2-butanone 4-phosphate. The sequence is that of 3,4-dihydroxy-2-butanone 4-phosphate synthase from Clostridium botulinum (strain Langeland / NCTC 10281 / Type F).